Reading from the N-terminus, the 191-residue chain is uncharacterized protein (191 aa).

The next 6 membrane-spanning stretches (helical) occupy residues 4-24, 26-46, 68-88, 90-110, 135-155, and 168-188; these read IYRQTIHLVFGVLIAFSVLIF, KQLIIPLIVSIVIGICLYFLC, GKGAIYFAIGMLISLILIDDI, AVFFGILVFAVGDSLATIIGI, LILYPFYGTYGIFVALISAFI, and LYLPFIVAFIINHQINICSLM.

Its subcellular location is the cell membrane. This is an uncharacterized protein from Methanocaldococcus jannaschii (strain ATCC 43067 / DSM 2661 / JAL-1 / JCM 10045 / NBRC 100440) (Methanococcus jannaschii).